The sequence spans 225 residues: MGIKDWPEGEGPRDKLLQKGAGQLSDAELLAVLLRNGLAGLNAVDLARSLISEFGGLRNLLCAPRNQVCRLPGVGPVKYAQLQAAAELARRVAQENLQRGQVLTNPDLTRDYLMRQLADRSYEVFAVLLLDSQHRVIQFVELFRGTIDSASVYPREVVSLVLEKKAAAVIVCHNHPSGIAEPSQADRRITERLKNALATIDVSLLDHMVVGDREIVSFAERGWIN.

Residues 102–224 (VLTNPDLTRD…IVSFAERGWI (123 aa)) form the MPN domain. Residues H173, H175, and D186 each contribute to the Zn(2+) site. Residues 173–186 (HNHPSGIAEPSQAD) carry the JAMM motif motif.

Belongs to the UPF0758 family.

The sequence is that of UPF0758 protein Sbal223_0402 from Shewanella baltica (strain OS223).